The chain runs to 85 residues: ATP synthase subunit c (85 aa).

The next 2 helical transmembrane spans lie at 10 to 30 (IAVA…FGLL) and 53 to 73 (FIVA…ALFF).

It belongs to the ATPase C chain family. As to quaternary structure, F-type ATPases have 2 components, F(1) - the catalytic core - and F(0) - the membrane proton channel. F(1) has five subunits: alpha(3), beta(3), gamma(1), delta(1), epsilon(1). F(0) has three main subunits: a(1), b(2) and c(10-14). The alpha and beta chains form an alternating ring which encloses part of the gamma chain. F(1) is attached to F(0) by a central stalk formed by the gamma and epsilon chains, while a peripheral stalk is formed by the delta and b chains.

It localises to the cell inner membrane. Its function is as follows. F(1)F(0) ATP synthase produces ATP from ADP in the presence of a proton or sodium gradient. F-type ATPases consist of two structural domains, F(1) containing the extramembraneous catalytic core and F(0) containing the membrane proton channel, linked together by a central stalk and a peripheral stalk. During catalysis, ATP synthesis in the catalytic domain of F(1) is coupled via a rotary mechanism of the central stalk subunits to proton translocation. Key component of the F(0) channel; it plays a direct role in translocation across the membrane. A homomeric c-ring of between 10-14 subunits forms the central stalk rotor element with the F(1) delta and epsilon subunits. The polypeptide is ATP synthase subunit c (Pseudomonas syringae pv. syringae (strain B728a)).